Reading from the N-terminus, the 130-residue chain is MKDEVVVVTGLAAMEPLIVHRMIVERTAAGTMIIETWTTAHTHESMAVRRASMSMTTHLKSKVQRIPTRPPRAPRLSVGGGGGTGTVPLARQASPETATIGTRTIGPSKGRRRRRRMRRRRRRRPVTSSC.

The tract at residues 61–130 (SKVQRIPTRP…RRRRPVTSSC (70 aa)) is disordered. Basic residues predominate over residues 109 to 130 (KGRRRRRRMRRRRRRRPVTSSC).

As to quaternary structure, interacts with 60S ribosome assembly factors GTPBP4 and MRTO4.

The protein resides in the nucleus. The protein localises to the nucleolus. Functionally, acts as a late-stage inhibitor of pre-60S ribosome assembly by preventing pre-60S ribosome export from nucleus. This chain is Ribosome biogenesis inhibitor MINAS-60, found in Mus musculus (Mouse).